The following is a 408-amino-acid chain: Solute carrier family 35 member F1 (408 aa).

Positions 1-20 (MIPPEPPQPQLQPPPPPAPP) are disordered. Helical transmembrane passes span 60 to 80 (MLISVALGQVLSLLVCGIGLT), 94 to 114 (VFQSFLNYILLFLVYTTTLAV), 129 to 147 (WWKYMILGLIDLEANYLVV), 159 to 179 (QLLDCFVIPVVILLSWFFLLI), 186 to 206 (FIGIVVCILGMGCMVGADVLV), 221 to 241 (LLVLGGATLYGISNVWEESII), 247 to 267 (VEFLGMIGLFGAFFSGIQLAI), 284 to 304 (LLYVGFSACMFGLYSFMPVVI), 311 to 331 (SVNLSLLTADLYSLFCGLFLF), and 335 to 355 (FSGLYLLSFFTILIGLVLYSS).

This sequence belongs to the SLC35F solute transporter family.

It is found in the cytoplasmic vesicle. It localises to the secretory vesicle. The protein resides in the synaptic vesicle membrane. In terms of biological role, putative solute transporter. This Mus musculus (Mouse) protein is Solute carrier family 35 member F1 (Slc35f1).